Reading from the N-terminus, the 122-residue chain is UPF0102 protein Mpe_A3766 (122 aa).

It belongs to the UPF0102 family.

This Methylibium petroleiphilum (strain ATCC BAA-1232 / LMG 22953 / PM1) protein is UPF0102 protein Mpe_A3766.